Reading from the N-terminus, the 535-residue chain is GMP synthase [glutamine-hydrolyzing] (535 aa).

One can recognise a Glutamine amidotransferase type-1 domain in the interval 4 to 210; sequence KILILDFGSQ…VHEICHCKPD (207 aa). Cysteine 85 acts as the Nucleophile in catalysis. Active-site residues include histidine 184 and glutamate 186. The GMPS ATP-PPase domain occupies 211 to 403; the sequence is WVMGDYIAEA…LGLPREMVYR (193 aa). 238–244 lines the ATP pocket; that stretch reads SGGVDSS.

In terms of assembly, homodimer.

The catalysed reaction is XMP + L-glutamine + ATP + H2O = GMP + L-glutamate + AMP + diphosphate + 2 H(+). It participates in purine metabolism; GMP biosynthesis; GMP from XMP (L-Gln route): step 1/1. Functionally, catalyzes the synthesis of GMP from XMP. The sequence is that of GMP synthase [glutamine-hydrolyzing] from Polynucleobacter asymbioticus (strain DSM 18221 / CIP 109841 / QLW-P1DMWA-1) (Polynucleobacter necessarius subsp. asymbioticus).